A 344-amino-acid chain; its full sequence is E3 ubiquitin-protein ligase RING2-A (344 aa).

The interaction with HIP2 stretch occupies residues 2–181; the sequence is ATPVNAQCSS…EDNCDSRSHV (180 aa). The RING-type zinc finger occupies 48–88; it reads CPICLDMLKNTMTTKECLHRFCSDCIVTALRSGNKECPTCR. Residues 90–95 form an interaction with nucleosomes via an acidic patch on histone H2A and histone H2B region; the sequence is KLVSKR. The interval 148–230 is disordered; that stretch reads QAMHRAQRVR…DPPGGGETGS (83 aa). Residues 180 to 192 are compositionally biased toward polar residues; it reads HVSNPSVHSNQEA.

As to quaternary structure, component of chromatin-associated Polycomb (PcG) complexes. Component of a PRC1-like complex. Component of some MLL1/MLL complex.

The protein resides in the nucleus. It localises to the cytoplasm. It is found in the chromosome. The enzyme catalyses S-ubiquitinyl-[E2 ubiquitin-conjugating enzyme]-L-cysteine + [acceptor protein]-L-lysine = [E2 ubiquitin-conjugating enzyme]-L-cysteine + N(6)-ubiquitinyl-[acceptor protein]-L-lysine.. It functions in the pathway protein modification; protein ubiquitination. In terms of biological role, E3 ubiquitin-protein ligase that mediates monoubiquitination of 'Lys-119' of histone H2A (H2AK119Ub), thereby playing a central role in histone code and gene regulation. H2AK119Ub gives a specific tag for epigenetic transcriptional repression. Essential component of a Polycomb group (PcG) multiprotein PRC1-like complex, a complex class required to maintain the transcriptionally repressive state of many genes, including Hox genes, throughout development. PcG PRC1 complex acts via chromatin remodeling and modification of histones, rendering chromatin heritably changed in its expressibility. This chain is E3 ubiquitin-protein ligase RING2-A (rnf2-a), found in Xenopus laevis (African clawed frog).